The chain runs to 227 residues: ATP-dependent dethiobiotin synthetase BioD (227 aa).

13–18 (DIGKTY) serves as a coordination point for ATP. Residue Thr17 coordinates Mg(2+). Lys38 is an active-site residue. Ser42 provides a ligand contact to substrate. ATP-binding positions include Asp55, 116–119 (EGSG), and 179–180 (NN). The Mg(2+) site is built by Asp55 and Glu116.

Belongs to the dethiobiotin synthetase family. As to quaternary structure, homodimer. Requires Mg(2+) as cofactor.

It is found in the cytoplasm. It catalyses the reaction (7R,8S)-7,8-diammoniononanoate + CO2 + ATP = (4R,5S)-dethiobiotin + ADP + phosphate + 3 H(+). It participates in cofactor biosynthesis; biotin biosynthesis; biotin from 7,8-diaminononanoate: step 1/2. In terms of biological role, catalyzes a mechanistically unusual reaction, the ATP-dependent insertion of CO2 between the N7 and N8 nitrogen atoms of 7,8-diaminopelargonic acid (DAPA, also called 7,8-diammoniononanoate) to form a ureido ring. In Clostridium botulinum (strain Eklund 17B / Type B), this protein is ATP-dependent dethiobiotin synthetase BioD.